A 352-amino-acid chain; its full sequence is 4-hydroxy-2-oxovalerate aldolase (352 aa).

The 253-residue stretch at valine 13–alanine 265 folds into the Pyruvate carboxyltransferase domain. Residue arginine 21–aspartate 22 coordinates substrate. Residue aspartate 22 coordinates Mn(2+). The Proton acceptor role is filled by histidine 25. Positions 175 and 204 each coordinate substrate. 2 residues coordinate Mn(2+): histidine 204 and histidine 206. Tyrosine 295 lines the substrate pocket.

It belongs to the 4-hydroxy-2-oxovalerate aldolase family.

It catalyses the reaction (S)-4-hydroxy-2-oxopentanoate = acetaldehyde + pyruvate. This is 4-hydroxy-2-oxovalerate aldolase from Mycolicibacterium paratuberculosis (strain ATCC BAA-968 / K-10) (Mycobacterium paratuberculosis).